The sequence spans 911 residues: Valine--tRNA ligase (911 aa).

A 'HIGH' region motif is present at residues 57–67 (PTVSGSLHVGH). Positions 599–603 (KMSKS) match the 'KMSKS' region motif. Lys-602 serves as a coordination point for ATP. The disordered stretch occupies residues 882–911 (EESAAEGTPETEVAVEASELGEPPAKKPKH).

It belongs to the class-I aminoacyl-tRNA synthetase family. ValS type 2 subfamily. Monomer.

It localises to the cytoplasm. It carries out the reaction tRNA(Val) + L-valine + ATP = L-valyl-tRNA(Val) + AMP + diphosphate. Its function is as follows. Catalyzes the attachment of valine to tRNA(Val). As ValRS can inadvertently accommodate and process structurally similar amino acids such as threonine, to avoid such errors, it has a 'posttransfer' editing activity that hydrolyzes mischarged Thr-tRNA(Val) in a tRNA-dependent manner. This is Valine--tRNA ligase from Bifidobacterium longum (strain NCC 2705).